We begin with the raw amino-acid sequence, 474 residues long: Protein FAM161A (474 aa).

Disordered regions lie at residues 78 to 126, 185 to 210, and 308 to 364; these read SSSS…PGEI, QKRR…DDAE, and REEL…DQGL. The stretch at 188-250 forms a coiled coil; that stretch reads REKASDAQET…KKTRERSKAA (63 aa). Residues 274–454 form a required for interaction with CFAP418 region; that stretch reads KLRELCRAKK…PTASSRGREQ (181 aa). A compositionally biased stretch (polar residues) spans 325–335; sequence LQSSPWPSHST. Residues lysine 397 and lysine 413 each participate in a glycyl lysine isopeptide (Lys-Gly) (interchain with G-Cter in SUMO2) cross-link. The segment at 412 to 474 is disordered; it reads LKETRRPNPS…KELARIGGAR (63 aa). Residues 422–431 are compositionally biased toward basic residues; sequence PRHKSPRRSA. Basic and acidic residues predominate over residues 450–468; that stretch reads RGREQAIRRSEKARMKELA.

Belongs to the FAM161 family. In terms of assembly, interacts (via central region) with CFAP418 (via N-terminus); the interaction is direct. Interacts (via C-terminus) with microtubules. Interacts with LCA5. Interacts with CEP290. Interacts with SDCCAG8. Interacts with FAM161B. Interacts with POC1B. Interacts with CEP78. Forms a microtubule-associated complex with POC5, CETN2 and POC1B. Interacts with CCDC15. In terms of tissue distribution, expressed in the retina and kidney.

Its subcellular location is the cytoplasm. It localises to the cytoskeleton. The protein resides in the cilium basal body. It is found in the cell projection. The protein localises to the cilium. Its subcellular location is the microtubule organizing center. It localises to the centrosome. The protein resides in the centriole. Functionally, involved in ciliogenesis. This is Protein FAM161A from Rattus norvegicus (Rat).